The following is a 495-amino-acid chain: Autoinducer 2 import ATP-binding protein LsrA (495 aa).

ABC transporter domains are found at residues 5–233 (IEAH…TPVS) and 256–494 (AQDF…FGGQ). Position 37–44 (37–44 (GGNGAGKS)) interacts with ATP.

Belongs to the ABC transporter superfamily. AI-2 autoinducer porter (TC 3.A.1.2.8) family. As to quaternary structure, the complex is composed of two ATP-binding proteins (LsrA), two transmembrane proteins (LsrC and LsrD) and a solute-binding protein (LsrB).

The protein localises to the cell inner membrane. It catalyses the reaction ATP + H2O + (2R,4S)-2-methyl-2,3,3,4-tetrahydroxytetrahydrofuran-[AI-2-binding protein]Side 1 = ADP + phosphate + (2R,4S)-2-methyl-2,3,3,4-tetrahydroxytetrahydrofuranSide 2 + [AI-2-binding protein]Side 1.. In terms of biological role, part of the ABC transporter complex LsrABCD involved in autoinducer 2 (AI-2) import. Responsible for energy coupling to the transport system. This is Autoinducer 2 import ATP-binding protein LsrA (lsrA) from Enterobacter sp. (strain 638).